A 55-amino-acid chain; its full sequence is Large ribosomal subunit protein bL33 (55 aa).

The protein belongs to the bacterial ribosomal protein bL33 family.

The protein is Large ribosomal subunit protein bL33 of Beijerinckia indica subsp. indica (strain ATCC 9039 / DSM 1715 / NCIMB 8712).